We begin with the raw amino-acid sequence, 462 residues long: Histidine--tRNA ligase (462 aa).

It belongs to the class-II aminoacyl-tRNA synthetase family. As to quaternary structure, homodimer.

Its subcellular location is the cytoplasm. The enzyme catalyses tRNA(His) + L-histidine + ATP = L-histidyl-tRNA(His) + AMP + diphosphate + H(+). The protein is Histidine--tRNA ligase of Trichormus variabilis (strain ATCC 29413 / PCC 7937) (Anabaena variabilis).